The chain runs to 473 residues: Protein nucleotidyltransferase YdiU (473 aa).

Residues glycine 79, glycine 81, arginine 82, lysine 102, aspartate 114, glycine 115, arginine 165, and arginine 172 each coordinate ATP. The active-site Proton acceptor is aspartate 241. Residues asparagine 242 and aspartate 251 each coordinate Mg(2+). Position 251 (aspartate 251) interacts with ATP.

Belongs to the SELO family. The cofactor is Mg(2+). Mn(2+) serves as cofactor.

The enzyme catalyses L-seryl-[protein] + ATP = 3-O-(5'-adenylyl)-L-seryl-[protein] + diphosphate. The catalysed reaction is L-threonyl-[protein] + ATP = 3-O-(5'-adenylyl)-L-threonyl-[protein] + diphosphate. It carries out the reaction L-tyrosyl-[protein] + ATP = O-(5'-adenylyl)-L-tyrosyl-[protein] + diphosphate. It catalyses the reaction L-histidyl-[protein] + UTP = N(tele)-(5'-uridylyl)-L-histidyl-[protein] + diphosphate. The enzyme catalyses L-seryl-[protein] + UTP = O-(5'-uridylyl)-L-seryl-[protein] + diphosphate. The catalysed reaction is L-tyrosyl-[protein] + UTP = O-(5'-uridylyl)-L-tyrosyl-[protein] + diphosphate. Functionally, nucleotidyltransferase involved in the post-translational modification of proteins. It can catalyze the addition of adenosine monophosphate (AMP) or uridine monophosphate (UMP) to a protein, resulting in modifications known as AMPylation and UMPylation. This chain is Protein nucleotidyltransferase YdiU, found in Marinomonas sp. (strain MWYL1).